A 261-amino-acid chain; its full sequence is Small ribosomal subunit protein uS2 (261 aa).

S2 is modified (N-acetylserine). Positions 214-261 are disordered; it reads ATEDIKTDDVEEAPAADAETEWTGETEEVDWAESGATPAAEEAAASNW. Positions 222-244 are enriched in acidic residues; that stretch reads DVEEAPAADAETEWTGETEEVDW. Residues 245–261 are compositionally biased toward low complexity; it reads AESGATPAAEEAAASNW.

This sequence belongs to the universal ribosomal protein uS2 family. As to quaternary structure, component of the small ribosomal subunit. Mature ribosomes consist of a small (40S) and a large (60S) subunit. The 40S subunit contains about 33 different proteins and 1 molecule of RNA (18S). The 60S subunit contains about 49 different proteins and 3 molecules of RNA (25S, 5.8S and 5S). Interacts with RPS21.

The protein resides in the cytoplasm. Its function is as follows. Required for the assembly and/or stability of the 40S ribosomal subunit. Required for the processing of the 20S rRNA-precursor to mature 18S rRNA in a late step of the maturation of 40S ribosomal subunits. The sequence is that of Small ribosomal subunit protein uS2 from Debaryomyces hansenii (strain ATCC 36239 / CBS 767 / BCRC 21394 / JCM 1990 / NBRC 0083 / IGC 2968) (Yeast).